The primary structure comprises 315 residues: Olfactory receptor 51L1 (315 aa).

Residues 1–27 (MGDWNNSDAVEPIFILRGFPGLEYVHS) lie on the Extracellular side of the membrane. Asn-5 carries N-linked (GlcNAc...) asparagine glycosylation. The helical transmembrane segment at 28-48 (WLSILFCLAYLVAFMGNVTIL) threads the bilayer. Over 49–56 (SVIWIESS) the chain is Cytoplasmic. The helical transmembrane segment at 57 to 77 (LHQPMYYFISILAVNDLGMSL) threads the bilayer. At 78-101 (STLPTMLAVLWLDAPEIQASACYA) the chain is on the extracellular side. A disulfide bond links Cys-99 and Cys-191. The helical transmembrane segment at 102 to 122 (QLFFIHTFTFLESSVLLAMAF) threads the bilayer. The Cytoplasmic segment spans residues 123–141 (DRFVAICHPLHYPTILTNS). A helical transmembrane segment spans residues 142–162 (VIGKIGLACLLRSLGVVLPTP). Residues 163–198 (LLLRHYHYCHGNALSHAFCLHQDVLRLSCTDARTNS) lie on the Extracellular side of the membrane. The chain crosses the membrane as a helical span at residues 199-219 (IYGLCVVIATLGVDSIFILLS). The Cytoplasmic portion of the chain corresponds to 220–239 (YVLILNTVLDIASREEQLKA). Residues 240–260 (LNTCVSHICVVLIFFVPVIGV) form a helical membrane-spanning segment. Residues 261–275 (SMVHRFGKHLSPIVH) are Extracellular-facing. The helical transmembrane segment at 276-296 (ILMADIYLLLPPVLNPIVYSV) threads the bilayer. Topologically, residues 297 to 315 (RTKQIRLGILHKFVLRRRF) are cytoplasmic.

Belongs to the G-protein coupled receptor 1 family.

It localises to the cell membrane. Its function is as follows. Odorant receptor. The chain is Olfactory receptor 51L1 (OR51L1) from Homo sapiens (Human).